The sequence spans 501 residues: Pre-mRNA-splicing factor 38B (501 aa).

Low complexity predominate over residues 1 to 11 (MAGSQQQQQQQ). Disordered stretches follow at residues 1 to 28 (MAGSQQQQQQQAVSKPTGGKHGNNLPLW) and 208 to 501 (DQHM…ADSP). A compositionally biased stretch (basic residues) spans 243–273 (GDKRRSRTPRRSPSPRKSQNRSRSRSHHRER). The stretch at 281–302 (ELERERDRQRKEREGKDRDRDR) forms a coiled coil. Residues 281-328 (ELERERDRQRKEREGKDRDRDRDRDRERDRERDRDRRRSRTPDRNAER) are compositionally biased toward basic and acidic residues. A compositionally biased stretch (basic residues) spans 329-341 (RRSRSRERRRSRS). The span at 342-408 (TSRDKRTERK…EEKKHREEKR (67 aa)) shows a compositional bias: basic and acidic residues. Basic residues predominate over residues 409 to 435 (SKRSRSRSRDRKHKAERSSKKRSRSGS). A compositionally biased stretch (basic and acidic residues) spans 437–447 (SRQEAGEEKNR). The segment covering 448-468 (KRERSHSKDRQHKRSRSKERS) has biased composition (basic residues). Over residues 469–491 (HRRESSNERIHARQERPSSESGE) the composition is skewed to basic and acidic residues. Residues 492 to 501 (RTNSVRADSP) are compositionally biased toward polar residues.

The protein belongs to the PRP38 family.

The protein resides in the nucleus. Functionally, may be required for pre-mRNA splicing. The polypeptide is Pre-mRNA-splicing factor 38B (prpf38b) (Danio rerio (Zebrafish)).